Consider the following 312-residue polypeptide: Aspartate carbamoyltransferase catalytic subunit (312 aa).

Residues Arg58 and Thr59 each coordinate carbamoyl phosphate. Residue Lys86 coordinates L-aspartate. The carbamoyl phosphate site is built by Arg108, His136, and Gln139. 2 residues coordinate L-aspartate: Arg169 and Arg223. Gly264 and Pro265 together coordinate carbamoyl phosphate.

It belongs to the aspartate/ornithine carbamoyltransferase superfamily. ATCase family. In terms of assembly, heterododecamer (2C3:3R2) of six catalytic PyrB chains organized as two trimers (C3), and six regulatory PyrI chains organized as three dimers (R2).

The enzyme catalyses carbamoyl phosphate + L-aspartate = N-carbamoyl-L-aspartate + phosphate + H(+). It functions in the pathway pyrimidine metabolism; UMP biosynthesis via de novo pathway; (S)-dihydroorotate from bicarbonate: step 2/3. Functionally, catalyzes the condensation of carbamoyl phosphate and aspartate to form carbamoyl aspartate and inorganic phosphate, the committed step in the de novo pyrimidine nucleotide biosynthesis pathway. In Endomicrobium trichonymphae, this protein is Aspartate carbamoyltransferase catalytic subunit.